A 113-amino-acid chain; its full sequence is Cell cycle protein GpsB (113 aa).

Positions 36 to 68 (LDMVIKDYSTFTQEIEALQAENIRLVQELDNAP) form a coiled coil.

The protein belongs to the GpsB family. In terms of assembly, forms polymers through the coiled coil domains. Interacts with PBP1, MreC and EzrA.

Its subcellular location is the cytoplasm. Divisome component that associates with the complex late in its assembly, after the Z-ring is formed, and is dependent on DivIC and PBP2B for its recruitment to the divisome. Together with EzrA, is a key component of the system that regulates PBP1 localization during cell cycle progression. Its main role could be the removal of PBP1 from the cell pole after pole maturation is completed. Also contributes to the recruitment of PBP1 to the division complex. Not essential for septum formation. This Listeria welshimeri serovar 6b (strain ATCC 35897 / DSM 20650 / CCUG 15529 / CIP 8149 / NCTC 11857 / SLCC 5334 / V8) protein is Cell cycle protein GpsB.